The sequence spans 128 residues: Putative histidinol dehydrogenase (128 aa).

The interval 21–84 (QRPDIAPRHH…EGQEKASGRR (64 aa)) is disordered. Basic and acidic residues-rich tracts occupy residues 34-50 (HRAE…RRTA) and 72-81 (QGREGQEKAS).

It belongs to the histidinol dehydrogenase family.

It catalyses the reaction L-histidinol + 2 NAD(+) + H2O = L-histidine + 2 NADH + 3 H(+). It participates in amino-acid biosynthesis; L-histidine biosynthesis; L-histidine from 5-phospho-alpha-D-ribose 1-diphosphate: step 9/9. Functionally, catalyzes the sequential NAD-dependent oxidations of L-histidinol to L-histidinaldehyde and then to L-histidine. The protein is Putative histidinol dehydrogenase (hisD) of Azospirillum brasilense.